Reading from the N-terminus, the 97-residue chain is DNA-directed RNA polymerase subunit omega (97 aa).

The segment covering Met-1–Leu-16 has biased composition (polar residues). The interval Met-1–Gly-21 is disordered.

It belongs to the RNA polymerase subunit omega family. The RNAP catalytic core consists of 2 alpha, 1 beta, 1 beta' and 1 omega subunit. When a sigma factor is associated with the core the holoenzyme is formed, which can initiate transcription.

The enzyme catalyses RNA(n) + a ribonucleoside 5'-triphosphate = RNA(n+1) + diphosphate. Promotes RNA polymerase assembly. Latches the N- and C-terminal regions of the beta' subunit thereby facilitating its interaction with the beta and alpha subunits. The protein is DNA-directed RNA polymerase subunit omega of Saccharopolyspora erythraea (strain ATCC 11635 / DSM 40517 / JCM 4748 / NBRC 13426 / NCIMB 8594 / NRRL 2338).